Consider the following 342-residue polypeptide: MQTLQTTSLRVADNQLFILDQQALPQEKRWLDASTVEALVGHIHALRVRGAPLIGLSASLLLALLAESGHRRDELAIALETLRAARPTAVNLMNNLDRMKQALRQEDFVPALAAEALRLIDEDKQLCDDIARAGSALVKPGSRLLTHCNTGGLATAGTGTALGVIARAYAQGNVQNVWVDETRPLLQGGRLTAWELGELGVPYQLITDSMAASLMAKGLVDAVWVGADRIAANGDVANKIGTYSLAVLAKFHGIPFYVAAPQTTLDPHCPNGDAIPIEQRAAGEVTGVAGSFGAVQWAPENAQVYNPAFDVTPAALISGWVLDSGVVTPEDVAKGVFRTEAA.

Substrate contacts are provided by residues 49–51, Arg86, and Gln187; that span reads RGA. Asp228 serves as the catalytic Proton donor. 238–239 contacts substrate; it reads NK.

This sequence belongs to the eIF-2B alpha/beta/delta subunits family. MtnA subfamily.

The enzyme catalyses 5-(methylsulfanyl)-alpha-D-ribose 1-phosphate = 5-(methylsulfanyl)-D-ribulose 1-phosphate. It functions in the pathway amino-acid biosynthesis; L-methionine biosynthesis via salvage pathway; L-methionine from S-methyl-5-thio-alpha-D-ribose 1-phosphate: step 1/6. Functionally, catalyzes the interconversion of methylthioribose-1-phosphate (MTR-1-P) into methylthioribulose-1-phosphate (MTRu-1-P). In Citrobacter koseri (strain ATCC BAA-895 / CDC 4225-83 / SGSC4696), this protein is Methylthioribose-1-phosphate isomerase.